A 108-amino-acid polypeptide reads, in one-letter code: Class I hydrophobin 3 (108 aa).

The first 17 residues, 1–17, serve as a signal peptide directing secretion; it reads MFFQTTIVAALAFLAVA. Intrachain disulfides connect Cys28–Cys87, Cys35–Cys81, Cys36–Cys69, and Cys88–Cys101. Asn37 is a glycosylation site (N-linked (GlcNAc...) asparagine).

This sequence belongs to the fungal hydrophobin family. Self-assembles to form functional amyloid fibrils called rodlets. Self-assembly into fibrillar rodlets occurs spontaneously at hydrophobic:hydrophilic interfaces and the rodlets further associate laterally to form amphipathic monolayers.

The protein localises to the secreted. It is found in the cell wall. Its function is as follows. Aerial growth, conidiation, and dispersal of filamentous fungi in the environment rely upon a capability of their secreting small amphipathic proteins called hydrophobins (HPBs) with low sequence identity. Class I can self-assemble into an outermost layer of rodlet bundles on aerial cell surfaces, conferring cellular hydrophobicity that supports fungal growth, development and dispersal; whereas Class II form highly ordered films at water-air interfaces through intermolecular interactions but contribute nothing to the rodlet structure. Vmh3 is a class I hydrophobin that is essential for the maintenance of the surface hydrophobicity of the mycelium and might be involved in the development of fruiting bodies. Plays an important role in hyphal resistance against environmental stress. Necessary for the efficient biodegradation of lignin. The sequence is that of Class I hydrophobin 3 from Pleurotus ostreatus (Oyster mushroom).